A 960-amino-acid polypeptide reads, in one-letter code: Anoctamin-1 (960 aa).

Residues 1–333 (MRVPEKYSTL…FGEKVGLYFA (333 aa)) are Cytoplasmic-facing. A disordered region spans residues 92–115 (TRSVRQDQPLPGKGSPVDAGSPEV). The residue at position 196 (serine 196) is a Phosphoserine. The helical transmembrane segment at 334-354 (WLGAYTQMLIPASIVGVIVFL) threads the bilayer. Over 355-406 (YGCATVDENIPSMEMCDQRYNITMCPLCDKTCSYWKMSSACATARASHLFDN) the chain is Extracellular. Intrachain disulfides connect cysteine 370–cysteine 395, cysteine 379–cysteine 836, cysteine 382–cysteine 386, and cysteine 625–cysteine 630. A helical membrane pass occupies residues 407-427 (PATVFFSVFMALWAATFMEHW). Residue glutamate 425 participates in Ca(2+) binding. The Cytoplasmic segment spans residues 428-493 (KRKQMRLNYR…RDRFPAYFTN (66 aa)). A helical membrane pass occupies residues 494-514 (LVSIIFMIAVTFAIVLGVIIY). Topologically, residues 515–542 (RISTAAALAMNSSPSVRSNIRVTVTATA) are extracellular. A helical transmembrane segment spans residues 543 to 563 (VIINLVVIILLDEVYGCIARW). Residues 564 to 581 (LTKIEVPKTEKSFEERLT) are Cytoplasmic-facing. The helical transmembrane segment at 582–602 (FKAFLLKFVNSYTPIFYVAFF) threads the bilayer. Over 603–631 (KGRFVGRPGDYVYIFRSFRMEECAPGGCL) the chain is Extracellular. The chain crosses the membrane as a helical span at residues 632 to 652 (MELCIQLSIIMLGKQLIQNNL). Residues asparagine 651, glutamate 654, glutamate 702, glutamate 705, glutamate 734, and aspartate 738 each coordinate Ca(2+). Residues 653-699 (FEIGIPKMKKFIRYLKLRRQSPSDREEYVKRKQRYEVDFNLEPFAGL) are Cytoplasmic-facing. Helical transmembrane passes span 700–720 (TPEY…VASF) and 721–741 (PLAP…DAKK). The Cytoplasmic segment spans residues 742–758 (FVTELRRPVAIRAKDIG). The helical transmembrane segment at 759–779 (IWYNILRGVGKLAVIINAFVI) threads the bilayer. Residues 780–866 (SFTSDFIPRL…FWAVLAARLA (87 aa)) lie on the Extracellular side of the membrane. An N-linked (GlcNAc...) asparagine glycan is attached at asparagine 806. A helical transmembrane segment spans residues 867-887 (FVIVFQNLVMFMSDFVDWVIP). Aspartate 883 and aspartate 888 together coordinate Ca(2+). The Cytoplasmic portion of the chain corresponds to 888–960 (DIPKDISQQI…PSYEYHGDAL (73 aa)). Residues 928 to 960 (PRDVPCNNHSPTTHPEAGDGSPVPSYEYHGDAL) form a disordered region.

It belongs to the anoctamin family. As to quaternary structure, homodimer. Interacts with CFTR. Interacts with TRPV4. As to expression, expressed at the apical surface of the vomeronasal epithelium (at protein level). Expressed in the lateral and septal nasal glands (at protein level). Highly expressed in pulmonary bronchiole epithelial cells, pancreatic and submandibular gland acinar cells, kidney proximal tubule, all retinal cell layers, most sensory cells of dorsal root ganglia, Leydig cells and spermatocytes (at protein level). In the dorsal root ganglia, detected in small-diameter nociceptive neurons and in larger myelinated neurons (at protein level). In the dorsal root ganglia, expressed in MrgprA3-positive neurons (at protein level). In the developing brain, highly expressed in the ventricular zone and subventricular zone at 12.5 dpc and 14.5 dpc where it is detected in radial glial cells but not in neurons with expression dramatically decreased at P1 (at protein level). Highly expressed in the endometrial stroma (at protein level). In taste buds of the vallate papillae, expressed in the apical region of type I taste cells (at protein level). In the kidney, expressed in the collecting duct (at protein level). In the retina, strongly expressed in the outer and inner plexiform layers, weakly expressed in some somata in the inner nuclear layer and ganglion cell layer and not expressed in the outer nuclear layer (at protein level). Expressed in various retinal neurons including rod bipolar cells (at protein level). Expressed in eye, brain, myometrium and endometrium with higher levels in endometrium than myometrium in estrus and day 18 pregnant mice. Not detected in uterine smooth muscle cells. Expressed at high levels in the thyroid gland and gastrointestinal muscles.

It localises to the apical cell membrane. Its subcellular location is the presynapse. The catalysed reaction is chloride(in) = chloride(out). With respect to regulation, ATP and calmodulin are essential for its activation. Channel activity is inhibited by CFTR protein and by chloride inhibitors such as niflumic acid (NFA) and 4,4'-diisothiocyanatostilbene-2,2'-disulfonic acid (DIDS). Activated by heat with activation seen at temperatures above 44 degrees Celsius. Activated by BDNF in radial glial cells. Its function is as follows. Calcium-activated chloride channel (CaCC). Plays a role in transepithelial anion transport and smooth muscle contraction. Required for the normal functioning of the interstitial cells of Cajal (ICCs) which generate electrical pacemaker activity in gastrointestinal smooth muscles. Acts as a major contributor to basal and stimulated chloride conductance in airway epithelial cells and plays an important role in tracheal cartilage development. Required for CFTR activation by enhancing endoplasmic reticulum Ca(2+) store release and is also required for CFTR membrane expression. Required for basal and ATP-dependent mucus secretion in airways and intestine, probably by controlling exocytosis of mucus-filled granules by providing Ca(2+) to an apical signaling compartment. Contributes to airway mucus expression induced by interleukins IL3 and IL8 and by the asthma-associated protein CLCA1 and is required for expression of mucin MUC5AC. However, was shown in another study not to be required for MUC5AC expression. Plays a role in the propagation of Ca(2+) waves in Kolliker's organ in the cochlea and contributes to the refinement of auditory brainstem circuitries prior to hearing onset. In vomeronasal sensory neurons, modulates spontaneous firing patterns in the absence of stimuli as well as the firing pattern of pheromone-evoked activity. Responsible for calcium-activated chloride channel activity in type I taste cells of the vallate papillae. Acts as a heat sensor in nociceptive neurons. In dorsal root ganglion neurons, plays a role in mediating non-histaminergic Mas-related G-protein coupled receptor (MRGPR)-dependent itching, acting as a downstream effector of MRGPRs. In the developing brain, required for the Ca(2+)-dependent process extension of radial glial cells. The sequence is that of Anoctamin-1 (Ano1) from Mus musculus (Mouse).